A 209-amino-acid polypeptide reads, in one-letter code: Large ribosomal subunit protein uL3 (209 aa).

The interval 130–162 is disordered; that stretch reads RGPMTHGSKFKRAPGSMGASSDPSRTFKNKRMP.

This sequence belongs to the universal ribosomal protein uL3 family. As to quaternary structure, part of the 50S ribosomal subunit. Forms a cluster with proteins L14 and L19.

One of the primary rRNA binding proteins, it binds directly near the 3'-end of the 23S rRNA, where it nucleates assembly of the 50S subunit. This is Large ribosomal subunit protein uL3 from Clostridium botulinum (strain Alaska E43 / Type E3).